Reading from the N-terminus, the 222-residue chain is Germin-like protein subfamily 1 member 14 (222 aa).

The first 22 residues, 1 to 22 (MRFSKSLILITLSALVISFAEA), serve as a signal peptide directing secretion. Cys32 and Cys49 are joined by a disulfide. In terms of domain architecture, Cupin type-1 spans 63–214 (SGLNQAGTTN…AFQLDVNVVK (152 aa)). A glycan (N-linked (GlcNAc...) asparagine) is linked at Asn78. His111, His113, Glu118, and His160 together coordinate Mn(2+).

It belongs to the germin family. As to quaternary structure, oligomer (believed to be a pentamer but probably hexamer).

It is found in the secreted. The protein resides in the extracellular space. Its subcellular location is the apoplast. In terms of biological role, may play a role in plant defense. Probably has no oxalate oxidase activity even if the active site is conserved. This Arabidopsis thaliana (Mouse-ear cress) protein is Germin-like protein subfamily 1 member 14.